We begin with the raw amino-acid sequence, 315 residues long: 4-hydroxy-3-methylbut-2-enyl diphosphate reductase (315 aa).

Residue C12 coordinates [4Fe-4S] cluster. H41 and H74 together coordinate (2E)-4-hydroxy-3-methylbut-2-enyl diphosphate. Residues H41 and H74 each contribute to the dimethylallyl diphosphate site. Residues H41 and H74 each contribute to the isopentenyl diphosphate site. C96 serves as a coordination point for [4Fe-4S] cluster. H124 is a binding site for (2E)-4-hydroxy-3-methylbut-2-enyl diphosphate. H124 provides a ligand contact to dimethylallyl diphosphate. Residue H124 participates in isopentenyl diphosphate binding. E126 serves as the catalytic Proton donor. Residue T168 coordinates (2E)-4-hydroxy-3-methylbut-2-enyl diphosphate. C198 contacts [4Fe-4S] cluster. (2E)-4-hydroxy-3-methylbut-2-enyl diphosphate contacts are provided by S226, S227, N228, and S270. 4 residues coordinate dimethylallyl diphosphate: S226, S227, N228, and S270. 4 residues coordinate isopentenyl diphosphate: S226, S227, N228, and S270.

This sequence belongs to the IspH family. It depends on [4Fe-4S] cluster as a cofactor.

The enzyme catalyses isopentenyl diphosphate + 2 oxidized [2Fe-2S]-[ferredoxin] + H2O = (2E)-4-hydroxy-3-methylbut-2-enyl diphosphate + 2 reduced [2Fe-2S]-[ferredoxin] + 2 H(+). It catalyses the reaction dimethylallyl diphosphate + 2 oxidized [2Fe-2S]-[ferredoxin] + H2O = (2E)-4-hydroxy-3-methylbut-2-enyl diphosphate + 2 reduced [2Fe-2S]-[ferredoxin] + 2 H(+). Its pathway is isoprenoid biosynthesis; dimethylallyl diphosphate biosynthesis; dimethylallyl diphosphate from (2E)-4-hydroxy-3-methylbutenyl diphosphate: step 1/1. The protein operates within isoprenoid biosynthesis; isopentenyl diphosphate biosynthesis via DXP pathway; isopentenyl diphosphate from 1-deoxy-D-xylulose 5-phosphate: step 6/6. Functionally, catalyzes the conversion of 1-hydroxy-2-methyl-2-(E)-butenyl 4-diphosphate (HMBPP) into a mixture of isopentenyl diphosphate (IPP) and dimethylallyl diphosphate (DMAPP). Acts in the terminal step of the DOXP/MEP pathway for isoprenoid precursor biosynthesis. This chain is 4-hydroxy-3-methylbut-2-enyl diphosphate reductase, found in Pseudomonas syringae pv. tomato (strain ATCC BAA-871 / DC3000).